The sequence spans 611 residues: Dihydroxy-acid dehydratase (611 aa).

Asp81 contacts Mg(2+). A [2Fe-2S] cluster-binding site is contributed by Cys122. Residues Asp123 and Lys124 each coordinate Mg(2+). Position 124 is an N6-carboxylysine (Lys124). Cys195 lines the [2Fe-2S] cluster pocket. Mg(2+) is bound at residue Glu491. Ser517 serves as the catalytic Proton acceptor.

Belongs to the IlvD/Edd family. In terms of assembly, homodimer. [2Fe-2S] cluster is required as a cofactor. It depends on Mg(2+) as a cofactor.

The enzyme catalyses (2R)-2,3-dihydroxy-3-methylbutanoate = 3-methyl-2-oxobutanoate + H2O. It carries out the reaction (2R,3R)-2,3-dihydroxy-3-methylpentanoate = (S)-3-methyl-2-oxopentanoate + H2O. It functions in the pathway amino-acid biosynthesis; L-isoleucine biosynthesis; L-isoleucine from 2-oxobutanoate: step 3/4. It participates in amino-acid biosynthesis; L-valine biosynthesis; L-valine from pyruvate: step 3/4. Its function is as follows. Functions in the biosynthesis of branched-chain amino acids. Catalyzes the dehydration of (2R,3R)-2,3-dihydroxy-3-methylpentanoate (2,3-dihydroxy-3-methylvalerate) into 2-oxo-3-methylpentanoate (2-oxo-3-methylvalerate) and of (2R)-2,3-dihydroxy-3-methylbutanoate (2,3-dihydroxyisovalerate) into 2-oxo-3-methylbutanoate (2-oxoisovalerate), the penultimate precursor to L-isoleucine and L-valine, respectively. This Brucella abortus (strain S19) protein is Dihydroxy-acid dehydratase.